Here is a 350-residue protein sequence, read N- to C-terminus: MAAASFITSLVTRLLRSAQSGRLHQRPFHLSAVRNEAVVISGRKLAEQIKQEVRQEVEEWVASGNKRPHLSVVLVGENPASQSYVLNKTRAAASVGINSETILKPASISEEELLNLINKLNNDDNVDGLLVQLPLPEHIDERKVCNAVSPDKDVDGFHVINVGRMCLDQCSMLPATPWGVWEIIKRTGIPTLGKNVVVAGRSKNVGMPIAMLLHTDGAHERPGGDATVTISHRYTPKEELKKHTALADIVISAAGIPNLITADMIKEGAAVIDVGINRIQDPITAKPKLVGDVDFEGVKKKAGYITPVPGGVGPMTVAMLMKNTIIAAKKVLRLEEQEVLKSKELGVASN.

The transit peptide at 1–35 directs the protein to the mitochondrion; sequence MAAASFITSLVTRLLRSAQSGRLHQRPFHLSAVRN. N6-acetyllysine; alternate is present on K50. Residue K50 forms a Glycyl lysine isopeptide (Lys-Gly) (interchain with G-Cter in SUMO2); alternate linkage. Substrate contacts are provided by residues 84–88 and 131–133; these read YVLNK and VQL. NAD(+) is bound by residues 200 to 202 and R233; that span reads GRS. 309-313 contributes to the substrate binding site; the sequence is PGGVG.

Belongs to the tetrahydrofolate dehydrogenase/cyclohydrolase family. In terms of assembly, homodimer. Mg(2+) is required as a cofactor.

It localises to the mitochondrion. It carries out the reaction (6R)-5,10-methylene-5,6,7,8-tetrahydrofolate + NAD(+) = (6R)-5,10-methenyltetrahydrofolate + NADH. The enzyme catalyses (6R)-5,10-methenyltetrahydrofolate + H2O = (6R)-10-formyltetrahydrofolate + H(+). Its function is as follows. Although its dehydrogenase activity is NAD-specific, it can also utilize NADP at a reduced efficiency. The sequence is that of Bifunctional methylenetetrahydrofolate dehydrogenase/cyclohydrolase, mitochondrial (MTHFD2) from Bos taurus (Bovine).